Here is a 330-residue protein sequence, read N- to C-terminus: DNA-directed RNA polymerase subunit alpha (330 aa).

The segment at 1–231 (MQTNLLKPKT…EQLAVFAQLE (231 aa)) is alpha N-terminal domain (alpha-NTD). The tract at residues 250–330 (FDPILLRPVD…NWPPAGLDKR (81 aa)) is alpha C-terminal domain (alpha-CTD).

This sequence belongs to the RNA polymerase alpha chain family. In terms of assembly, homodimer. The RNAP catalytic core consists of 2 alpha, 1 beta, 1 beta' and 1 omega subunit. When a sigma factor is associated with the core the holoenzyme is formed, which can initiate transcription.

The catalysed reaction is RNA(n) + a ribonucleoside 5'-triphosphate = RNA(n+1) + diphosphate. DNA-dependent RNA polymerase catalyzes the transcription of DNA into RNA using the four ribonucleoside triphosphates as substrates. The chain is DNA-directed RNA polymerase subunit alpha from Paracidovorax citrulli (strain AAC00-1) (Acidovorax citrulli).